The following is a 180-amino-acid chain: Early nodulin-16 (180 aa).

The N-terminal stretch at 1 to 22 (MASSSPILLMIIFSMWLLISHS) is a signal peptide. The 105-residue stretch at 25–129 (TDYLIGDSHN…GLKLAVVVQN (105 aa)) folds into the Phytocyanin domain. A glycan (N-linked (GlcNAc...) asparagine) is linked at asparagine 67. Cysteines 83 and 117 form a disulfide. Asparagine 152 carries N-linked (GlcNAc...) asparagine glycosylation. Serine 154 carries the GPI-anchor amidated serine lipid modification. Residues 155-180 (GNKGGAAGLGFIMWLGVSLVMMMFLI) constitute a propeptide, removed in mature form.

Belongs to the early nodulin-like (ENODL) family. In terms of tissue distribution, expressed in developing nodules upon symbiosis with Sinorhizobium meliloti.

The protein localises to the symbiosome. The protein resides in the cell membrane. May act as a carbohydrate transporter. This chain is Early nodulin-16, found in Medicago truncatula (Barrel medic).